Here is a 385-residue protein sequence, read N- to C-terminus: Calcium/calmodulin-dependent protein kinase type 1D (385 aa).

One can recognise a Protein kinase domain in the interval 23–279 (FEFKETLGTG…CEQAARHPWI (257 aa)). ATP-binding positions include 29–37 (LGTGAFSEV) and Lys-52. Lys-113 participates in a covalent cross-link: Glycyl lysine isopeptide (Lys-Gly) (interchain with G-Cter in SUMO2). Position 122 is a phosphoserine (Ser-122). Asp-144 functions as the Proton acceptor in the catalytic mechanism. Thr-180 is subject to Phosphothreonine; by CaMKK1 and CaMKK2. The segment at 279-319 (IAGDTALSKNIHESVSAQIRKNFAKSKWRQAFNATAVVRHM) is autoinhibitory domain. The calmodulin-binding stretch occupies residues 299 to 320 (KNFAKSKWRQAFNATAVVRHMR). Residues 318 to 324 (HMRRLQL) carry the Nuclear export signal motif. Residues 363 to 385 (VAGVGAERRPRPTTVTTGHTGSK) are disordered. Positions 375-385 (TTVTTGHTGSK) are enriched in polar residues.

It belongs to the protein kinase superfamily. CAMK Ser/Thr protein kinase family. CaMK subfamily. In terms of tissue distribution, expressed ubiquitously with high levels in brain and low levels in kidney. Isoform 2 is highly expressed in brain compared to other tissues. In hematopoietic cell lines predominant expression was detected in T and EC cells.

The protein resides in the cytoplasm. It is found in the nucleus. The catalysed reaction is L-seryl-[protein] + ATP = O-phospho-L-seryl-[protein] + ADP + H(+). The enzyme catalyses L-threonyl-[protein] + ATP = O-phospho-L-threonyl-[protein] + ADP + H(+). With respect to regulation, activated by Ca(2+)/calmodulin. Binding of calmodulin results in conformational change that relieves intrasteric autoinhibition and allows phosphorylation of Thr-180 within the activation loop by CaMKK1 or CaMKK2. Phosphorylation of Thr-180 results in several fold increase in total activity. Unlike CaMK4, may be unable to exhibit autonomous activity after Ca(2+)/calmodulin activation. In terms of biological role, calcium/calmodulin-dependent protein kinase that operates in the calcium-triggered CaMKK-CaMK1 signaling cascade and, upon calcium influx, activates CREB-dependent gene transcription, regulates calcium-mediated granulocyte function and respiratory burst and promotes basal dendritic growth of hippocampal neurons. In neutrophil cells, required for cytokine-induced proliferative responses and activation of the respiratory burst. Activates the transcription factor CREB1 in hippocampal neuron nuclei. May play a role in apoptosis of erythroleukemia cells. In vitro, phosphorylates transcription factor CREM isoform Beta. Isoform 1 but not isoform 2 activates CREB1. This is Calcium/calmodulin-dependent protein kinase type 1D (Camk1d) from Mus musculus (Mouse).